The following is a 630-amino-acid chain: Ankyrin repeat protein OPG025 (630 aa).

ANK repeat units follow at residues 36–69, 70–100, 103–134, 174–210, 338–367, and 408–437; these read DGET…YKNI, NDFD…EINS, NGIN…PTCS, MGKT…EMCH, KHIN…VVVN, and HGRS…DINI.

It belongs to the orthopoxvirus OPG025 family. In terms of assembly, interacts with components of host SCF complex CUL1 and SKP1 and components of the cullin deneddylation/COP9 signalosome complex subunits COPS7A and COPS7B.

Plays a role in the inhibition of host immune repsonse by counteracting the action of interferons on early events in the viral replication cycle. This chain is Ankyrin repeat protein OPG025 (OPG025), found in Monkeypox virus.